The sequence spans 332 residues: Cyclin-dependent kinase 1 (332 aa).

Positions 22–312 (FTKLEKIGEG…AKKALVHPYF (291 aa)) constitute a Protein kinase domain. Residues 28-36 (IGEGTYGVV) and K51 contribute to the ATP site. T32 carries the post-translational modification Phosphothreonine. Phosphotyrosine is present on Y33. Residue D146 is the Proton acceptor of the active site.

Belongs to the protein kinase superfamily. CMGC Ser/Thr protein kinase family. CDC2/CDKX subfamily. As to quaternary structure, forms a stable but non-covalent complex with a regulatory subunit and with a cyclin. Interacts with cks-1. Post-translationally, phosphorylated.

The protein resides in the nucleus. Its subcellular location is the cytoplasm. It is found in the cytoskeleton. The protein localises to the microtubule organizing center. It localises to the centrosome. The protein resides in the chromosome. It catalyses the reaction L-seryl-[protein] + ATP = O-phospho-L-seryl-[protein] + ADP + H(+). The catalysed reaction is L-threonyl-[protein] + ATP = O-phospho-L-threonyl-[protein] + ADP + H(+). It carries out the reaction [DNA-directed RNA polymerase] + ATP = phospho-[DNA-directed RNA polymerase] + ADP + H(+). Its activity is regulated as follows. Phosphorylation both activates and inactivates the enzyme depending on the site of phosphorylation. In terms of biological role, plays a key role in the control of the eukaryotic cell cycle. Required for entry into S-phase and mitosis. Acts as a component of the kinase complex that phosphorylates the repetitive C-terminus of RNA polymerase II. May function in concert with npp-16 to arrest prophase blastomeres in response to anoxia. The protein is Cyclin-dependent kinase 1 (cdk-1) of Caenorhabditis elegans.